A 325-amino-acid polypeptide reads, in one-letter code: Beta-ketoacyl-[acyl-carrier-protein] synthase III (325 aa).

Catalysis depends on residues Cys-119 and His-252. The tract at residues 253–257 is ACP-binding; sequence QANLR. Asn-282 is a catalytic residue.

Belongs to the thiolase-like superfamily. FabH family. As to quaternary structure, homodimer.

Its subcellular location is the cytoplasm. The enzyme catalyses malonyl-[ACP] + acetyl-CoA + H(+) = 3-oxobutanoyl-[ACP] + CO2 + CoA. Its pathway is lipid metabolism; fatty acid biosynthesis. In terms of biological role, catalyzes the condensation reaction of fatty acid synthesis by the addition to an acyl acceptor of two carbons from malonyl-ACP. Catalyzes the first condensation reaction which initiates fatty acid synthesis and may therefore play a role in governing the total rate of fatty acid production. Possesses both acetoacetyl-ACP synthase and acetyl transacylase activities. Its substrate specificity determines the biosynthesis of branched-chain and/or straight-chain of fatty acids. The protein is Beta-ketoacyl-[acyl-carrier-protein] synthase III of Polaromonas naphthalenivorans (strain CJ2).